A 189-amino-acid polypeptide reads, in one-letter code: MDQLRQSLLDAPIIEKGEYQYFVHPISDGVPMLKPELLREIVIRIIRKAELENVDKIVTPAAMGIHISTALSLMTDIPLVVIRKRQYGLDGEVPLFQETGYSESEMYINDVEEGDRVLVLDDVLSTGGTMKAILDALTDEVGAEVVDVVAVIKKAGENELDDTDYNVKTLINVTVEDGEVVIVDAKGDD.

It belongs to the purine/pyrimidine phosphoribosyltransferase family. Archaeal HPRT subfamily.

In terms of biological role, may catalyze a purine salvage reaction, the substrate is unknown. This chain is HGPRTase-like protein, found in Halorubrum lacusprofundi (strain ATCC 49239 / DSM 5036 / JCM 8891 / ACAM 34).